We begin with the raw amino-acid sequence, 215 residues long: Large ribosomal subunit protein eL14 (215 aa).

N6-acetyllysine is present on Lys-79. Lys-85 is subject to N6-acetyllysine; alternate. Residue Lys-85 is modified to N6-succinyllysine; alternate. Lys-124 is covalently cross-linked (Glycyl lysine isopeptide (Lys-Gly) (interchain with G-Cter in SUMO2)). Residue Ser-139 is modified to Phosphoserine. The segment at 161-215 (VPAKKITAASKKAPAQKVPAQKATGQKAAPAPKAQKGQKAPAQKAPAPKASGKKA) is disordered. 6 tandem repeats follow at residues 171–175 (KKAPA), 176–180 (QKVPA), 181–185 (QKATG), 186–190 (QKAAP), 193–195 (KAQ), and 196–198 (KGQ). A 4 X 5 AA tandem repeats of Q-K-A-[PAS]-X region spans residues 171 to 190 (KKAPAQKVPAQKATGQKAAP). A 2 X 3 AA tandem repeats of K-[GA]-Q region spans residues 193–198 (KAQKGQ). Lys-204 is subject to N6-succinyllysine.

It belongs to the eukaryotic ribosomal protein eL14 family. As to quaternary structure, component of the large ribosomal subunit.

The protein localises to the cytoplasm. Component of the large ribosomal subunit. The ribosome is a large ribonucleoprotein complex responsible for the synthesis of proteins in the cell. This chain is Large ribosomal subunit protein eL14 (RPL14), found in Homo sapiens (Human).